The primary structure comprises 328 residues: Neuropeptides B/W receptor type 1 (328 aa).

At 1–37 the chain is on the extracellular side; the sequence is MDNASFSEPWPANASGPDPALSCSNASTLAPLPAPLA. N3, N13, and N25 each carry an N-linked (GlcNAc...) asparagine glycan. A helical transmembrane segment spans residues 38–61; it reads VAVPVVYAVICAVGLAGNSAVLYV. Residues 62-72 are Cytoplasmic-facing; sequence LLRAPRMKTVT. A helical membrane pass occupies residues 73 to 97; the sequence is NLFILNLAIADELFTLVLPINIADF. Residues 98–112 are Extracellular-facing; that stretch reads LLRQWPFGELMCKLI. A disulfide bond links C109 and C188. The helical transmembrane segment at 113–132 threads the bilayer; that stretch reads VAIDQYNTFSSLYFLTVMSA. The Cytoplasmic portion of the chain corresponds to 133 to 157; sequence DRYLVVLATAESRRVAGRTYSAARA. Residues 158-177 traverse the membrane as a helical segment; it reads VSLAVWGIVTLVVLPFAVFA. Residues 178-202 are Extracellular-facing; the sequence is RLDDEQGRRQCVLVFPQPEAFWWRA. The chain crosses the membrane as a helical span at residues 203 to 224; it reads SRLYTLVLGFAIPVSTICVLYT. Topologically, residues 225 to 248 are cytoplasmic; it reads TLLCRLHAMRLDSHAKALERAKKR. Residues 249–273 form a helical membrane-spanning segment; the sequence is VTFLVVAILAVCLLCWTPYHLSTVV. Residues 274-283 lie on the Extracellular side of the membrane; it reads ALTTDLPQTP. A helical transmembrane segment spans residues 284–298; that stretch reads LVIAISYFITSLSYA. The Cytoplasmic portion of the chain corresponds to 299–328; the sequence is NSCLNPFLYAFLDASFRRNLRQLITCRAAA.

The protein belongs to the G-protein coupled receptor 1 family. As to expression, found in cerebellum and frontal cortex. Detected at high levels in hippocampus, amygdala and trachea; at moderate levels in fetal brain, pituitary gland and prostate. Not in caudate, accumbens, kidney or liver. Also detected at high levels in lung carcinoma.

Its subcellular location is the cell membrane. Functionally, interacts specifically with a number of opioid ligands. Receptor for neuropeptides B and W, which may be involved in neuroendocrine system regulation, food intake and the organization of other signals. Has a higher affinity for neuropeptide B. The protein is Neuropeptides B/W receptor type 1 (NPBWR1) of Homo sapiens (Human).